The sequence spans 132 residues: Small ribosomal subunit protein uS8 (132 aa).

It belongs to the universal ribosomal protein uS8 family. In terms of assembly, part of the 30S ribosomal subunit. Contacts proteins S5 and S12.

Its function is as follows. One of the primary rRNA binding proteins, it binds directly to 16S rRNA central domain where it helps coordinate assembly of the platform of the 30S subunit. In Flavobacterium psychrophilum (strain ATCC 49511 / DSM 21280 / CIP 103535 / JIP02/86), this protein is Small ribosomal subunit protein uS8.